Reading from the N-terminus, the 581-residue chain is Rhodanese-like domain-containing protein 6 (581 aa).

One can recognise a Rhodanese domain in the interval 158–258; it reads ENKELVLLDA…YLEQFPSGGF (101 aa). Cysteine 216 serves as the catalytic Cysteine persulfide intermediate.

The sequence is that of Rhodanese-like domain-containing protein 6 (STR6) from Arabidopsis thaliana (Mouse-ear cress).